A 187-amino-acid chain; its full sequence is Aminodeoxychorismate synthase component 2 (187 aa).

The Glutamine amidotransferase type-1 domain occupies 1–187 (MILLIDNYDS…HQLLANFLNR (187 aa)). Residues C79, H168, and E170 contribute to the active site.

As to quaternary structure, monomer. Heterodimer consisting of two non-identical subunits: a glutamine amidotransferase subunit (PabA) and a aminodeoxychorismate synthase subunit (PabB).

The enzyme catalyses chorismate + L-glutamine = 4-amino-4-deoxychorismate + L-glutamate. It participates in cofactor biosynthesis; tetrahydrofolate biosynthesis; 4-aminobenzoate from chorismate: step 1/2. Part of a heterodimeric complex that catalyzes the two-step biosynthesis of 4-amino-4-deoxychorismate (ADC), a precursor of p-aminobenzoate (PABA) and tetrahydrofolate. In the first step, a glutamine amidotransferase (PabA) generates ammonia as a substrate that, along with chorismate, is used in the second step, catalyzed by aminodeoxychorismate synthase (PabB) to produce ADC. PabA converts glutamine into glutamate only in the presence of stoichiometric amounts of PabB. The chain is Aminodeoxychorismate synthase component 2 (pabA) from Klebsiella aerogenes (Enterobacter aerogenes).